The chain runs to 271 residues: Formamidopyrimidine-DNA glycosylase (271 aa).

Pro2 serves as the catalytic Schiff-base intermediate with DNA. The active-site Proton donor is Glu3. The active-site Proton donor; for beta-elimination activity is the Lys58. Positions 91, 110, and 152 each coordinate DNA. The FPG-type zinc finger occupies 237–271; sequence LVYGREGQPCVHCGRPIRCETIGQRSSYFCTRCQR. Arg261 (proton donor; for delta-elimination activity) is an active-site residue.

Belongs to the FPG family. Monomer. Zn(2+) is required as a cofactor.

It catalyses the reaction Hydrolysis of DNA containing ring-opened 7-methylguanine residues, releasing 2,6-diamino-4-hydroxy-5-(N-methyl)formamidopyrimidine.. It carries out the reaction 2'-deoxyribonucleotide-(2'-deoxyribose 5'-phosphate)-2'-deoxyribonucleotide-DNA = a 3'-end 2'-deoxyribonucleotide-(2,3-dehydro-2,3-deoxyribose 5'-phosphate)-DNA + a 5'-end 5'-phospho-2'-deoxyribonucleoside-DNA + H(+). Functionally, involved in base excision repair of DNA damaged by oxidation or by mutagenic agents. Acts as a DNA glycosylase that recognizes and removes damaged bases. Has a preference for oxidized purines, such as 7,8-dihydro-8-oxoguanine (8-oxoG). Has AP (apurinic/apyrimidinic) lyase activity and introduces nicks in the DNA strand. Cleaves the DNA backbone by beta-delta elimination to generate a single-strand break at the site of the removed base with both 3'- and 5'-phosphates. This Syntrophotalea carbinolica (strain DSM 2380 / NBRC 103641 / GraBd1) (Pelobacter carbinolicus) protein is Formamidopyrimidine-DNA glycosylase.